Consider the following 654-residue polypeptide: Bifunctional polymyxin resistance protein ArnA (654 aa).

The tract at residues Met1–Leu303 is formyltransferase ArnAFT. The Proton donor; for formyltransferase activity role is filled by His105. Thr137–Asp141 is a binding site for (6R)-10-formyltetrahydrofolate. A dehydrogenase ArnADH region spans residues Asn313–Ser654. Residues Asp346 and Asp367 to Ile368 each bind NAD(+). UDP-alpha-D-glucuronate-binding positions include Ala392, Tyr397, and Thr431–Ser432. The active-site Proton acceptor; for decarboxylase activity is Glu433. UDP-alpha-D-glucuronate-binding positions include Arg459, Asn491, Gln532–Arg534, and Tyr612. Arg618 functions as the Proton donor; for decarboxylase activity in the catalytic mechanism.

In the N-terminal section; belongs to the Fmt family. UDP-L-Ara4N formyltransferase subfamily. The protein in the C-terminal section; belongs to the NAD(P)-dependent epimerase/dehydratase family. UDP-glucuronic acid decarboxylase subfamily. In terms of assembly, homohexamer, formed by a dimer of trimers.

It catalyses the reaction UDP-alpha-D-glucuronate + NAD(+) = UDP-beta-L-threo-pentopyranos-4-ulose + CO2 + NADH. The catalysed reaction is UDP-4-amino-4-deoxy-beta-L-arabinose + (6R)-10-formyltetrahydrofolate = UDP-4-deoxy-4-formamido-beta-L-arabinose + (6S)-5,6,7,8-tetrahydrofolate + H(+). It functions in the pathway nucleotide-sugar biosynthesis; UDP-4-deoxy-4-formamido-beta-L-arabinose biosynthesis; UDP-4-deoxy-4-formamido-beta-L-arabinose from UDP-alpha-D-glucuronate: step 1/3. The protein operates within nucleotide-sugar biosynthesis; UDP-4-deoxy-4-formamido-beta-L-arabinose biosynthesis; UDP-4-deoxy-4-formamido-beta-L-arabinose from UDP-alpha-D-glucuronate: step 3/3. Its pathway is bacterial outer membrane biogenesis; lipopolysaccharide biosynthesis. Its function is as follows. Bifunctional enzyme that catalyzes the oxidative decarboxylation of UDP-glucuronic acid (UDP-GlcUA) to UDP-4-keto-arabinose (UDP-Ara4O) and the addition of a formyl group to UDP-4-amino-4-deoxy-L-arabinose (UDP-L-Ara4N) to form UDP-L-4-formamido-arabinose (UDP-L-Ara4FN). The modified arabinose is attached to lipid A and is required for resistance to polymyxin and cationic antimicrobial peptides. The polypeptide is Bifunctional polymyxin resistance protein ArnA (Wigglesworthia glossinidia brevipalpis).